Reading from the N-terminus, the 481-residue chain is Ribosomal RNA small subunit methyltransferase F (481 aa).

S-adenosyl-L-methionine is bound by residues 119–125 (ASAPGSK), Glu143, Asp170, and Asp188. Cys241 (nucleophile) is an active-site residue.

The protein belongs to the class I-like SAM-binding methyltransferase superfamily. RsmB/NOP family.

It is found in the cytoplasm. It carries out the reaction cytidine(1407) in 16S rRNA + S-adenosyl-L-methionine = 5-methylcytidine(1407) in 16S rRNA + S-adenosyl-L-homocysteine + H(+). In terms of biological role, specifically methylates the cytosine at position 1407 (m5C1407) of 16S rRNA. The polypeptide is Ribosomal RNA small subunit methyltransferase F (Shewanella sp. (strain MR-4)).